The chain runs to 279 residues: Lysozyme-like protein 2 (279 aa).

The signal sequence occupies residues 1 to 19; that stretch reads MIKLLVSFTILFVLSSARP. In terms of domain architecture, Ch-type lysozyme spans 47–265; the sequence is MGNAVDFSFP…AAAPKTEVNM (219 aa).

It belongs to the glycosyl hydrolase 25 family. As to expression, expressed in intestine.

Involved in resistance to Gram-positive bacteria P.aeruginosa or B.thuringiensis infection. The polypeptide is Lysozyme-like protein 2 (Caenorhabditis elegans).